The sequence spans 201 residues: UPF0301 protein RHA1_ro03630 (201 aa).

Belongs to the UPF0301 (AlgH) family.

The protein is UPF0301 protein RHA1_ro03630 of Rhodococcus jostii (strain RHA1).